The sequence spans 285 residues: MKFGIVVNINRKDALELASELVIWLKNRSLDYLFDSLSAKALNVNESSPIEAMNTHCDVFISLGGDGTLLFTSHYSVTKPVIGINVGHLGFLTEFSKEEMYGAIEKVLNGSYTIYERTQLEAHIDVEHEKKRFTALNDVVIEKGTYSRIPTFNIKLDDEQLSAYRADGIIIATSTGSTAYSLSAGGPVIFPKSNVFVITPICPHMLTVRPIVISDDKHIEVFVDAPDGEFPLNCDGHQRKLLLPGEVISVKKSEEMINLVANENRNYCEILRSKLLWGREHKPGL.

Residue Asp66 is the Proton acceptor of the active site. Residues 66–67 (DG), 137–138 (ND), Arg148, Arg165, Asp167, and 178–183 (TAYSLS) each bind NAD(+).

The protein belongs to the NAD kinase family. A divalent metal cation is required as a cofactor.

The protein localises to the cytoplasm. It catalyses the reaction NAD(+) + ATP = ADP + NADP(+) + H(+). In terms of biological role, involved in the regulation of the intracellular balance of NAD and NADP, and is a key enzyme in the biosynthesis of NADP. Catalyzes specifically the phosphorylation on 2'-hydroxyl of the adenosine moiety of NAD to yield NADP. In Chlorobium phaeobacteroides (strain BS1), this protein is NAD kinase.